Here is a 72-residue protein sequence, read N- to C-terminus: Cell division protein ZapB (72 aa).

The stretch at 5-71 (ILDQLEEKIK…LRSLLGQIDN (67 aa)) forms a coiled coil.

It belongs to the ZapB family. In terms of assembly, homodimer. The ends of the coiled-coil dimer bind to each other, forming polymers. Interacts with FtsZ.

It localises to the cytoplasm. Functionally, non-essential, abundant cell division factor that is required for proper Z-ring formation. It is recruited early to the divisome by direct interaction with FtsZ, stimulating Z-ring assembly and thereby promoting cell division earlier in the cell cycle. Its recruitment to the Z-ring requires functional FtsA or ZipA. This is Cell division protein ZapB from Actinobacillus pleuropneumoniae serotype 5b (strain L20).